A 156-amino-acid chain; its full sequence is uncharacterized protein (156 aa).

In terms of domain architecture, N-acetyltransferase spans 10–156; that stretch reads VAARTFPLAC…NDYVMVRELV (147 aa).

It belongs to the acetyltransferase family.

This is an uncharacterized protein from Mycobacterium bovis (strain ATCC BAA-935 / AF2122/97).